The chain runs to 103 residues: Phosphoribosyl-ATP pyrophosphatase (103 aa).

Residues 84–103 are disordered; the sequence is LQSREGKLSKTSDRKEINDL.

This sequence belongs to the PRA-PH family.

It localises to the cytoplasm. It catalyses the reaction 1-(5-phospho-beta-D-ribosyl)-ATP + H2O = 1-(5-phospho-beta-D-ribosyl)-5'-AMP + diphosphate + H(+). Its pathway is amino-acid biosynthesis; L-histidine biosynthesis; L-histidine from 5-phospho-alpha-D-ribose 1-diphosphate: step 2/9. In Listeria innocua serovar 6a (strain ATCC BAA-680 / CLIP 11262), this protein is Phosphoribosyl-ATP pyrophosphatase (hisE).